The following is a 374-amino-acid chain: MVKSTDGGGGSSSSSSVAPFLRKCYDMVDDSTTDSIISWSPSADNSFVILDTTVFSVQLLPKYFKHSNFSSFIRQLNIYGFRKVDADRWEFANDGFVRGQKDLLKNVIRRKNVQSSEQSKHESTSTTYAQEKSGLWKEVDILKGDKQVLAQELIKVRQYQEVTDTKMLHLEDRVQGMEESQQEMLSFLVMVMKNPSLLVQLLQPKEKNTWRKAGEGAKIVEEVTDEGESNSYGLPLVTYQPPSDNNGTAKSNSNDVNDFLRNADMLKFCLDENHVPLIIPDLYDDGAWEKLLLLSPSRKKTKKQENIVKKGKDDLTLEEEEEDGTMELDKSYMLKLISEEMEKPDDFEFGQLTPERSRNLEILTEQMELLASNE.

The DNA-binding element occupies 17 to 112; it reads VAPFLRKCYD…LLKNVIRRKN (96 aa). The interval 126–192 is hydrophobic repeat HR-A/B; that stretch reads TTYAQEKSGL…EMLSFLVMVM (67 aa). An AHA1 motif is present at residues 285–294; the sequence is DGAWEKLLLL. Positions 298–303 match the Nuclear localization signal motif; that stretch reads RKKTKK. Positions 330 to 339 match the AHA2 motif; sequence KSYMLKLISE. Residues 363 to 370 carry the Nuclear export signal motif; the sequence is LTEQMELL.

It belongs to the HSF family. Class A subfamily. Homotrimer. Post-translationally, exhibits temperature-dependent phosphorylation.

The protein localises to the cytoplasm. It is found in the nucleus. Its function is as follows. Transcriptional activator that specifically binds DNA sequence 5'-AGAAnnTTCT-3' known as heat shock promoter elements (HSE). The sequence is that of Heat stress transcription factor A-8 (HSFA8) from Arabidopsis thaliana (Mouse-ear cress).